A 196-amino-acid chain; its full sequence is APGW-amide-related neuropeptide (196 aa).

An N-terminal signal peptide occupies residues 1-22; sequence METLNIFLVIFSLLGTIIIASS. The propeptide occupies 23 to 48; the sequence is SDESSERKKRDLDTIDDTNNDFLTAD. Trp-54 bears the Tryptophan amide mark. The propeptide occupies 58–68; it reads SFDDDILNNLD. At Trp-74 the chain carries Tryptophan amide. A propeptide spanning residues 78–88 is cleaved from the precursor; it reads SDMLFDSEEIE. At Trp-94 the chain carries Tryptophan amide. The propeptide occupies 98–105; that stretch reads SSSLYDDE. A Tryptophan amide modification is found at Trp-111. The propeptide occupies 115-129; that stretch reads SSALLDDLSLYNSIV. Residue Trp-135 is modified to Tryptophan amide. Residues 139-146 constitute a propeptide that is removed on maturation; sequence SDTFKVDI. 2 positions are modified to tryptophan amide: Trp-151 and Trp-158. The propeptide occupies 162–196; it reads SGPNMCMDFQDEILQLYKLLNEAEKLHSECEALNI.

As to expression, expressed in cerebral, pedal and visceral ganglia. TPGW-amide is found in pedal and cerebral ganglia and in shell adductor muscle (at protein level). RPGW-amide and KPGW-amide are found in pedal retractor muscle, ABRM and shell adductor muscle (at protein level).

RPGW-amide, KPGW-amide and TPGW-amide tetrapeptides are involved in control of muscle contraction and may function as neurotransmitters. These peptides increase tension of the pedal retractor muscle and, in conjunction with FMRF-amide, increase peak tension of the anterior byssus retractor muscle (ABRM). The protein is APGW-amide-related neuropeptide of Mytilus edulis (Blue mussel).